The following is a 250-amino-acid chain: Probable 2' cyclic ADP-D-ribose synthase TcpB (250 aa).

A disordered region spans residues 1-46 (MSKEKQAQSKAHKAQQAISSAKSLSTQKSKMSELERATRDGAAIGK). Low complexity predominate over residues 14 to 23 (AQQAISSAKS). The segment covering 30–39 (KMSELERATR) has biased composition (basic and acidic residues). The region spanning 117–250 (EEYDFFISHA…EIAKELHSLI (134 aa)) is the TIR domain. Glu192 is an active-site residue.

Homodimer. Interacts with host TIRAP. Interacts with host TLR4, abolishes the interaction of host TIRAP with TLR4.

Its subcellular location is the secreted. The protein localises to the host cell membrane. It carries out the reaction NAD(+) + H2O = ADP-D-ribose + nicotinamide + H(+). The catalysed reaction is NAD(+) = 2'cADPR + nicotinamide + H(+). Virulence factor that interferes with host Toll-like receptor 2 (TLR2) signaling, resulting in the reduction of dendritic cell maturation, inhibition of pro-inflammatory cytokine secretion and impaired NF-kappa-B activation in macrophages. Also acts on host TLR4. Binds host lipids. Has NAD(+) hydrolase (NADase) activity, catalyzes cleavage of NAD(+) into ADP-D-ribose (ADPR) and nicotinamide, also generates a cyclization variant of cyclic ADPR (cADPR), termed v-cADPR (probably 2'cADPR). This Brucella abortus (strain 2308) protein is Probable 2' cyclic ADP-D-ribose synthase TcpB.